We begin with the raw amino-acid sequence, 408 residues long: tRNA pseudouridine synthase D (408 aa).

Residue D82 is the Nucleophile of the active site. Residues 157-367 (GVPNRFGEQR…MEGERRPLRV (211 aa)) enclose the TRUD domain.

It belongs to the pseudouridine synthase TruD family.

The enzyme catalyses uridine(13) in tRNA = pseudouridine(13) in tRNA. Responsible for synthesis of pseudouridine from uracil-13 in transfer RNAs. In Geobacter sulfurreducens (strain ATCC 51573 / DSM 12127 / PCA), this protein is tRNA pseudouridine synthase D.